We begin with the raw amino-acid sequence, 315 residues long: Acetaldehyde dehydrogenase 1 (315 aa).

12 to 15 (SGNI) is an NAD(+) binding site. Catalysis depends on Cys-132, which acts as the Acyl-thioester intermediate. NAD(+) is bound by residues 163–171 (SAGPGTRAN) and Asn-291.

This sequence belongs to the acetaldehyde dehydrogenase family.

The enzyme catalyses acetaldehyde + NAD(+) + CoA = acetyl-CoA + NADH + H(+). The protein is Acetaldehyde dehydrogenase 1 of Paraburkholderia phymatum (strain DSM 17167 / CIP 108236 / LMG 21445 / STM815) (Burkholderia phymatum).